The chain runs to 307 residues: Probable porphobilinogen deaminase (307 aa).

Cys-240 is subject to S-(dipyrrolylmethanemethyl)cysteine.

This sequence belongs to the HMBS family. It depends on dipyrromethane as a cofactor.

The catalysed reaction is 4 porphobilinogen + H2O = hydroxymethylbilane + 4 NH4(+). It functions in the pathway porphyrin-containing compound metabolism; protoporphyrin-IX biosynthesis; coproporphyrinogen-III from 5-aminolevulinate: step 2/4. In terms of biological role, tetrapolymerization of the monopyrrole PBG into the hydroxymethylbilane pre-uroporphyrinogen in several discrete steps. The chain is Probable porphobilinogen deaminase (hemC) from Aeropyrum pernix (strain ATCC 700893 / DSM 11879 / JCM 9820 / NBRC 100138 / K1).